The primary structure comprises 148 residues: Flagellar assembly factor FliW (148 aa).

It belongs to the FliW family. As to quaternary structure, interacts with translational regulator CsrA and flagellin(s).

Its subcellular location is the cytoplasm. Functionally, acts as an anti-CsrA protein, binds CsrA and prevents it from repressing translation of its target genes, one of which is flagellin. Binds to flagellin and participates in the assembly of the flagellum. The polypeptide is Flagellar assembly factor FliW (Ruminiclostridium cellulolyticum (strain ATCC 35319 / DSM 5812 / JCM 6584 / H10) (Clostridium cellulolyticum)).